The chain runs to 966 residues: Serine/threonine-protein kinase 10 (966 aa).

Residues Ser-13 and Ser-20 each carry the phosphoserine modification. The Protein kinase domain occupies 36–294 (WEIVGELGDG…AAQLLQHPFV (259 aa)). Residues 42–50 (LGDGAFGKV) and Lys-65 each bind ATP. Catalysis depends on Asp-157, which acts as the Proton acceptor. The activation segment stretch occupies residues 175-224 (DFGVSAKNLKTLQKRDSFIGTPYWMAPEVVLCETMKDAPYDYKADIWSLG). Thr-185 carries the phosphothreonine; by autocatalysis modification. Ser-191 carries the phosphoserine modification. Composition is skewed to polar residues over residues 341–363 (TQDS…DSST) and 371–392 (QEPV…TTSP). The interval 341–497 (TQDSANVTQP…NLSTSESMDY (157 aa)) is disordered. A compositionally biased stretch (basic and acidic residues) spans 421–430 (IQMDEEKQIP). 4 positions are modified to phosphoserine: Ser-437, Ser-449, Ser-453, and Ser-484. Positions 438–456 (PAASKSQKANQSRPNSSAL) are enriched in polar residues. Residues 485–497 (DCSNLSTSESMDY) are compositionally biased toward polar residues. A phosphoserine mark is found at Ser-513 and Ser-548. Positions 588–936 (LQLEQMHKRF…LNQKKREQEM (349 aa)) form a coiled coil. Disordered regions lie at residues 660-692 (KKEV…KKQR), 826-865 (INGA…ENQM), and 901-966 (LDES…GDAS). 2 stretches are compositionally biased toward basic and acidic residues: residues 834-865 (EQRE…ENQM) and 901-946 (LDES…EAEP). Thr-950 carries the post-translational modification Phosphothreonine. Residues 950–966 (TPSKASNFFPYSSGDAS) show a composition bias toward polar residues.

This sequence belongs to the protein kinase superfamily. STE Ser/Thr protein kinase family. STE20 subfamily. In terms of assembly, homodimer; homodimerization is required for activation segment autophosphorylation. In terms of processing, autophosphorylates following homodimerization, leading to activation of the protein. As to expression, expressed predominantly in lymphoid organs such as spleen, thymus, and bone marrow.

Its subcellular location is the cell membrane. It carries out the reaction L-seryl-[protein] + ATP = O-phospho-L-seryl-[protein] + ADP + H(+). The enzyme catalyses L-threonyl-[protein] + ATP = O-phospho-L-threonyl-[protein] + ADP + H(+). Inhibited by the pyrrole-indolinone inhibitor SU11274 (K00593): intercalates between the ATP-binding Lys-65 and alpha-C glutamate (Glu-81), resulting in a partial disordering of the lysine side chain. Also specifically inhibited by erlotinib. Slightly inhibited by gefitinib. Functionally, serine/threonine-protein kinase involved in regulation of lymphocyte migration. Phosphorylates MSN, and possibly PLK1. Involved in regulation of lymphocyte migration by mediating phosphorylation of ERM proteins such as MSN. Acts as a negative regulator of MAP3K1/MEKK1. May also act as a cell cycle regulator by acting as a polo kinase kinase: mediates phosphorylation of PLK1 in vitro; however such data require additional evidences in vivo. The chain is Serine/threonine-protein kinase 10 (Stk10) from Mus musculus (Mouse).